Here is a 26-residue protein sequence, read N- to C-terminus: Conotoxin Eb6.18 (26 aa).

Intrachain disulfides connect Cys-7-Cys-18 and Cys-13-Cys-25.

It belongs to the conotoxin O1 superfamily. In terms of tissue distribution, expressed by the venom duct.

Its subcellular location is the secreted. This chain is Conotoxin Eb6.18 (E1), found in Conus ebraeus (Hebrew cone).